We begin with the raw amino-acid sequence, 415 residues long: MRPSIHRTAIAAVLATAFVAGTALAQKRDNVLFQAATDEQPAVIKTLEKLVNIETGTGDAEGIAAAGNFLEAELKNLGFTVTRSKSAGLVVGDNIVGKIKGRGGKNLLLMSHMDTVYLKGILAKAPFRVEGDKAYGPGIADDKGGNAVILHTLKLLKEYGVRDYGTITVLFNTDEEKGSFGSRDLIQEEAKLADYVLSFEPTSAGDEKLSLGTSGIAYVQVNITGKASHAGAAPELGVNALVEASDLVLRTMNIDDKAKNLRFNWTIAKAGNVSNIIPASATLNADVRYARNEDFDAAMKTLEERAQQKKLPEADVKVIVTRGRPAFNAGEGGKKLVDKAVAYYKEAGGTLGVEERTGGGTDAAYAALSGKPVIESLGLPGFGYHSDKAEYVDISAIPRRLYMAARLIMDLGAGK.

The signal sequence occupies residues 1–22 (MRPSIHRTAIAAVLATAFVAGT). His-112 serves as a coordination point for Zn(2+). Asp-114 is an active-site residue. Asp-141 is a binding site for Zn(2+). Glu-175 (proton acceptor) is an active-site residue. Residues Glu-176, Glu-200, and His-385 each coordinate Zn(2+).

Belongs to the peptidase M20A family. In terms of assembly, homodimer. It depends on Zn(2+) as a cofactor.

The catalysed reaction is Release of C-terminal glutamate residues from a wide range of N-acylating moieties, including peptidyl, aminoacyl, benzoyl, benzyloxycarbonyl, folyl and pteroyl groups.. Catalyzes the hydrolysis of reduced and non-reduced folates to pteroates and L-glutamate. This enzyme has a broad specificity. The chain is Carboxypeptidase G2 (cpg2) from Pseudomonas sp. (strain RS-16).